Reading from the N-terminus, the 203-residue chain is Outer-membrane lipoprotein LolB (203 aa).

Residues 1-18 (MTLRSFLILLLSSIVLAG) form the signal peptide. The N-palmitoyl cysteine moiety is linked to residue cysteine 19. A lipid anchor (S-diacylglycerol cysteine) is attached at cysteine 19.

Belongs to the LolB family. Monomer.

Its subcellular location is the cell outer membrane. Its function is as follows. Plays a critical role in the incorporation of lipoproteins in the outer membrane after they are released by the LolA protein. The protein is Outer-membrane lipoprotein LolB of Vibrio campbellii (strain ATCC BAA-1116).